The chain runs to 1340 residues: DNA-directed RNA polymerase subunit beta (1340 aa).

The protein belongs to the RNA polymerase beta chain family. In terms of assembly, the RNAP catalytic core consists of 2 alpha, 1 beta, 1 beta' and 1 omega subunit. When a sigma factor is associated with the core the holoenzyme is formed, which can initiate transcription.

It catalyses the reaction RNA(n) + a ribonucleoside 5'-triphosphate = RNA(n+1) + diphosphate. Functionally, DNA-dependent RNA polymerase catalyzes the transcription of DNA into RNA using the four ribonucleoside triphosphates as substrates. This is DNA-directed RNA polymerase subunit beta from Baumannia cicadellinicola subsp. Homalodisca coagulata.